The primary structure comprises 203 residues: Urease accessory protein UreG (203 aa).

11-18 (GPVGSGKT) contributes to the GTP binding site.

The protein belongs to the SIMIBI class G3E GTPase family. UreG subfamily. In terms of assembly, homodimer. UreD, UreF and UreG form a complex that acts as a GTP-hydrolysis-dependent molecular chaperone, activating the urease apoprotein by helping to assemble the nickel containing metallocenter of UreC. The UreE protein probably delivers the nickel.

The protein resides in the cytoplasm. In terms of biological role, facilitates the functional incorporation of the urease nickel metallocenter. This process requires GTP hydrolysis, probably effectuated by UreG. The sequence is that of Urease accessory protein UreG from Prochlorococcus marinus (strain AS9601).